The primary structure comprises 421 residues: Lipid II:glycine glycyltransferase (421 aa).

The protein belongs to the FemABX family. Monomer.

It localises to the cytoplasm. The enzyme catalyses beta-D-GlcNAc-(1-&gt;4)-Mur2Ac(oyl-L-Ala-D-isoglutaminyl-L-Lys-D-Ala-D-Ala)-di-trans,octa-cis-undecaprenyl diphosphate + glycyl-tRNA(Gly) = beta-D-GlcNAc-(1-&gt;4)-Mur2Ac(oyl-L-Ala-D-isoglutaminyl-L-Lys-(N(6)-Gly)-D-Ala-D-Ala)-di-trans,octa-cis-undecaprenyl diphosphate + tRNA(Gly) + H(+). Functionally, catalyzes the incorporation of the first glycine of the pentaglycine interpeptide bridge, which is characteristic of the S.aureus peptidoglycan. This glycine is added to the epsilon-amino group of the L-lysine of the membrane-bound lipid II intermediate (GlcNAc-(beta-1,4)-N-acetylmuramic acid(-L-Ala-D-iGln-L-Lys-D-Ala-D-Ala)-pyrophosphoryl-undecaprenol), using glycyl-tRNA(Gly) as donor, in a ribosome-independent mechanism. Involved in methicillin resistance. In Staphylococcus aureus (strain USA300), this protein is Lipid II:glycine glycyltransferase (femX).